The primary structure comprises 1342 residues: DNA-directed RNA polymerase subunit beta (1342 aa).

It belongs to the RNA polymerase beta chain family. In terms of assembly, the RNAP catalytic core consists of 2 alpha, 1 beta, 1 beta' and 1 omega subunit. When a sigma factor is associated with the core the holoenzyme is formed, which can initiate transcription.

The enzyme catalyses RNA(n) + a ribonucleoside 5'-triphosphate = RNA(n+1) + diphosphate. Its function is as follows. DNA-dependent RNA polymerase catalyzes the transcription of DNA into RNA using the four ribonucleoside triphosphates as substrates. The sequence is that of DNA-directed RNA polymerase subunit beta from Shewanella amazonensis (strain ATCC BAA-1098 / SB2B).